A 130-amino-acid polypeptide reads, in one-letter code: Small ribosomal subunit protein uS11 (130 aa).

This sequence belongs to the universal ribosomal protein uS11 family. Part of the 30S ribosomal subunit. Interacts with proteins S7 and S18. Binds to IF-3.

In terms of biological role, located on the platform of the 30S subunit, it bridges several disparate RNA helices of the 16S rRNA. Forms part of the Shine-Dalgarno cleft in the 70S ribosome. This chain is Small ribosomal subunit protein uS11, found in Prochlorococcus marinus (strain AS9601).